The following is a 346-amino-acid chain: Guanine nucleotide-binding protein subunit beta-2 (346 aa).

7 WD repeats span residues 57-96 (GHIN…KVQV), 99-138 (LRSA…ASGV), 147-185 (GYEG…KTMD), 188-227 (GHAG…HKQM), 230-269 (GHEM…QIAL), 274-313 (QKNT…HNGM), and 316-346 (GHEN…RLWL).

Belongs to the WD repeat G protein beta family. As to quaternary structure, g proteins are composed of 3 units, alpha, beta and gamma. Interacts with Ggammae/Guanine nucleotide-binding protein subunit gamma-e.

Functionally, guanine nucleotide-binding proteins (G proteins) are involved as modulators or transducers in various transmembrane signaling systems. The beta and gamma chains are required for the GTPase activity, for replacement of GDP by GTP, and for G protein-effector interaction. This chain is Guanine nucleotide-binding protein subunit beta-2, found in Calliphora vicina (Blue blowfly).